The following is a 363-amino-acid chain: Cytoskeleton protein RodZ (363 aa).

The Cytoplasmic segment spans residues 1-111 (MNTEASQDQT…LGKKHKKRDG (111 aa)). The HTH cro/C1-type domain occupies 19 to 79 (LRQARESLGL…KLVHLPEDEL (61 aa)). Positions 30-49 (QQTVAERLCLKVSTIRDIEE) form a DNA-binding region, H-T-H motif. Residues 112-132 (WLMSFTWLIVLVVLGLTGAWW) form a helical; Signal-anchor for type II membrane protein membrane-spanning segment. Residues 133–363 (WQNHQAQQAE…RVARLTVGVE (231 aa)) lie on the Periplasmic side of the membrane. Residues 151–277 (SAQLSQNGGQ…PLPTADAGVS (127 aa)) form a disordered region. Polar residues predominate over residues 188-199 (PLTNHSVSAITN). Positions 200 to 225 (SAPTTSSVPTTSSATTSSVPTTSSVP) are enriched in low complexity. Over residues 226–243 (KINSTEPVDTANTNTTMH) the composition is skewed to polar residues. The span at 247 to 259 (AASAAVSPSQVPQ) shows a compositional bias: low complexity.

This sequence belongs to the RodZ family.

Its subcellular location is the cell inner membrane. Functionally, cytoskeletal protein that is involved in cell-shape control through regulation of the length of the long axis. This chain is Cytoskeleton protein RodZ, found in Yersinia pseudotuberculosis serotype O:1b (strain IP 31758).